We begin with the raw amino-acid sequence, 598 residues long: Ceramide transfer protein (598 aa).

Residues Met-1–Gly-11 show a composition bias toward polar residues. The interval Met-1–Val-24 is disordered. The PH domain maps to Pro-23–Thr-117. A Phosphoserine modification is found at Ser-126. Ser-132 bears the Phosphoserine; by PKD mark. Position 135 is a phosphoserine (Ser-135). The tract at residues Asp-202–Asn-221 is disordered. Residues Lys-268–Lys-301 adopt a coiled-coil conformation. Position 315 is a phosphoserine (Ser-315). Residues Glu-321–Glu-327 carry the FFAT motif. The START domain occupies Gly-363–Ala-592. Positions 446, 467, 504, and 553 each coordinate an N-acylsphing-4-enine.

In terms of assembly, interacts with VAPA and VAPB. Interaction with VAPB is less efficient than with VAPA. Interacts (via FFAT motif) with the MOSPD2 (via MSP domain). Post-translationally, phosphorylation on Ser-132 decreases the affinity toward phosphatidylinositol 4-phosphate at Golgi membranes and reduces ceramide transfer activity. Inactivated by hyperphosphorylation of serine residues by CSNK1G2/CK1 that triggers dissociation from the Golgi complex, thus down-regulating ER-to-Golgi transport of ceramide and sphingomyelin synthesis.

The protein resides in the cytoplasm. The protein localises to the golgi apparatus. Its subcellular location is the endoplasmic reticulum. The enzyme catalyses N-hexadecanoylsphing-4-enine(in) = N-hexadecanoylsphing-4-enine(out). Its function is as follows. Shelters ceramides and diacylglycerol lipids inside its START domain and mediates the intracellular trafficking of ceramides and diacylglycerol lipids in a non-vesicular manner. This chain is Ceramide transfer protein (CERT1), found in Cricetulus griseus (Chinese hamster).